The following is a 169-amino-acid chain: Protein-export protein SecB (169 aa).

It belongs to the SecB family. In terms of assembly, homotetramer, a dimer of dimers. One homotetramer interacts with 1 SecA dimer.

The protein localises to the cytoplasm. In terms of biological role, one of the proteins required for the normal export of preproteins out of the cell cytoplasm. It is a molecular chaperone that binds to a subset of precursor proteins, maintaining them in a translocation-competent state. It also specifically binds to its receptor SecA. The protein is Protein-export protein SecB of Haemophilus influenzae (strain 86-028NP).